The primary structure comprises 55 residues: MENSRTSTFTAYVTVAFLLISTFVTMVVTESQIVWVPCNPRSKKTDDAGICRNTY.

The signal sequence occupies residues 1–31; that stretch reads MENSRTSTFTAYVTVAFLLISTFVTMVVTES. Residue Q32 is modified to Pyrrolidone carboxylic acid.

In terms of processing, contains 1 disulfide bond. Expressed by the venom gland.

It localises to the secreted. In Manica rubida (European giant red ant), this protein is U17-myrmicitoxin-Mri1b.